The chain runs to 459 residues: Putrescine aminotransferase (459 aa).

Pyridoxal 5'-phosphate contacts are provided by residues 150–151 (GT) and Gln-274. Lys-300 bears the N6-(pyridoxal phosphate)lysine mark. Thr-332 lines the pyridoxal 5'-phosphate pocket.

It belongs to the class-III pyridoxal-phosphate-dependent aminotransferase family. Putrescine aminotransferase subfamily. Requires pyridoxal 5'-phosphate as cofactor.

It catalyses the reaction an alkane-alpha,omega-diamine + 2-oxoglutarate = an omega-aminoaldehyde + L-glutamate. It carries out the reaction putrescine + 2-oxoglutarate = 1-pyrroline + L-glutamate + H2O. The catalysed reaction is cadaverine + 2-oxoglutarate = 5-aminopentanal + L-glutamate. It participates in amine and polyamine degradation; putrescine degradation; 4-aminobutanal from putrescine (transaminase route): step 1/1. Functionally, catalyzes the aminotransferase reaction from putrescine to 2-oxoglutarate, leading to glutamate and 4-aminobutanal, which spontaneously cyclizes to form 1-pyrroline. This is the first step in one of two pathways for putrescine degradation, where putrescine is converted into 4-aminobutanoate (gamma-aminobutyrate or GABA) via 4-aminobutanal. Also functions as a cadaverine transaminase in a a L-lysine degradation pathway to succinate that proceeds via cadaverine, glutarate and L-2-hydroxyglutarate. The protein is Putrescine aminotransferase of Escherichia coli O17:K52:H18 (strain UMN026 / ExPEC).